Here is a 1382-residue protein sequence, read N- to C-terminus: Histone-lysine N-methyltransferase SUVR5 (1382 aa).

Disordered stretches follow at residues 43 to 62 (TVTG…SEPK) and 354 to 373 (GNTN…NTPE). 3 C2H2-type zinc fingers span residues 735–758 (FACA…EERH), 769–792 (LQCI…QAVH), and 838–861 (FVCK…QAEH). A disordered region spans residues 915–935 (RRMQGSKSLGTEGNTEAGVSP). The span at 919-928 (GSKSLGTEGN) shows a compositional bias: polar residues. Positions 1145–1221 (LRCSCRSSVC…TCQNRVLQNG (77 aa)) constitute a Pre-SET domain. Positions 1147, 1149, 1154, 1159, 1182, 1203, 1207, 1209, and 1213 each coordinate Zn(2+). In terms of domain architecture, SET spans 1224-1356 (AKLEVFRTES…AGEEITRDYG (133 aa)). Residues 1234–1236 (KGW), Y1277, and 1313–1314 (NH) contribute to the S-adenosyl-L-methionine site. C1316 lines the Zn(2+) pocket. Y1355 is an S-adenosyl-L-methionine binding site. In terms of domain architecture, Post-SET spans 1366 to 1382 (NEHPCHCKATNCRGLLS). 3 residues coordinate Zn(2+): C1370, C1372, and C1377.

Belongs to the class V-like SAM-binding methyltransferase superfamily. Component of a regulatory complex with LDL1/SWP1. Interacts with LDL1/SWP1.

The protein resides in the nucleus. The protein localises to the chromosome. It catalyses the reaction L-lysyl-[histone] + S-adenosyl-L-methionine = N(6)-methyl-L-lysyl-[histone] + S-adenosyl-L-homocysteine + H(+). Functionally, histone methyltransferase that functions together with its binding partner LDL1/SWP1 as one of the regulators of flower timing in Arabidopsis. Mediates H3K9me2 deposition and regulates gene expression in a DNA methylation-independent manner. Binds DNA through its zinc fingers and represses the expression of a subset of stimulus response genes. May represent a novel mechanism for plants to regulate their chromatin and transcriptional state, which may allow for the adaptability and modulation necessary to rapidly respond to environment or developmental cues. This Arabidopsis thaliana (Mouse-ear cress) protein is Histone-lysine N-methyltransferase SUVR5.